A 207-amino-acid chain; its full sequence is MPLPDFRLIRLLPLAALVLTACSVTTPKGPGKSPDSPQWRQHQQDVRNLNQYQTRGAFAYISDQQKVYARFFWQQTGQDRYRLLLTNPLGSTELELNAQPGNVQLVDNKGQRYTADDAEEMIGKLTGMPIPLNSLRQWILGLPGDATDYKLDDQYRLSEITYSQNGKNWKVVYGGYDTKTQPAMPANMELTDGGQRIKLKMDNWIVK.

An N-terminal signal peptide occupies residues 1-21; sequence MPLPDFRLIRLLPLAALVLTA. Cysteine 22 carries the N-palmitoyl cysteine lipid modification. A lipid anchor (S-diacylglycerol cysteine) is attached at cysteine 22.

The protein belongs to the LolB family. Monomer.

It is found in the cell outer membrane. Plays a critical role in the incorporation of lipoproteins in the outer membrane after they are released by the LolA protein. The polypeptide is Outer-membrane lipoprotein LolB (Escherichia coli (strain K12 / MC4100 / BW2952)).